Consider the following 336-residue polypeptide: uncharacterized protein (336 aa).

The signal sequence occupies residues 1–23; sequence MKTRHLVYLAFALLGLGLAGLLE. Helical transmembrane passes span 34–54, 75–95, and 106–126; these read LLSL…LLLG, VVVA…LLTT, and VHSL…ALGY. A PINc domain is found at 144–255; that stretch reads VLDTSVLVDG…MARIYGVKAL (112 aa). D222 provides a ligand contact to Mg(2+). The region spanning 267-328 is the TRAM domain; it reads QLQVGDTLKL…IQTQVGRLFF (62 aa).

This sequence belongs to the PINc/VapC protein family. Requires Mg(2+) as cofactor.

It is found in the membrane. Functionally, part of a toxin-antitoxin (TA) system. An RNase. This is an uncharacterized protein from Thermus thermophilus (strain ATCC 27634 / DSM 579 / HB8).